Consider the following 363-residue polypeptide: Cytochrome b (363 aa).

Helical transmembrane passes span 23–43 (VGFILGILLILQILSGLLLTF), 67–89 (WFVRLYHSVGVSFYFFFMFIHII), 102–122 (SWYSGIVILILSIVIAFTGYV), and 164–184 (FFILHFVLPAVVLVIVLLHLY). Heme b is bound by residues H73 and H87. Heme b is bound by residues H168 and H182. Residue H187 coordinates a ubiquinone. A run of 4 helical transmembrane segments spans residues 210-230 (ILFSDVKFLVIISMFIGPQVG), 271-291 (VFPTKVSGLVAMVVVLKLLII), 309-329 (RVWTTTSVPLVPALFLLGCIG), and 332-352 (VINLDLIIIGIYGVLLSTTFV).

It belongs to the cytochrome b family. The main subunits of complex b-c1 are: cytochrome b, cytochrome c1 and the Rieske protein. It depends on heme b as a cofactor.

It is found in the mitochondrion inner membrane. In terms of biological role, component of the ubiquinol-cytochrome c reductase complex (complex III or cytochrome b-c1 complex) that is part of the mitochondrial respiratory chain. The b-c1 complex mediates electron transfer from ubiquinol to cytochrome c. Contributes to the generation of a proton gradient across the mitochondrial membrane that is then used for ATP synthesis. This chain is Cytochrome b (MT-CYB), found in Theileria parva (East coast fever infection agent).